We begin with the raw amino-acid sequence, 401 residues long: Type 3 secretion system translocon protein SctE (401 aa).

A coiled-coil region spans residues 129–160 (IQRLHEQNMKKIEENQEKIKETEENAKQVKKS). 2 helical membrane passes run 176–196 (VIVG…AMMV) and 224–244 (ILGP…TVMT). Residues 345 to 379 (LALNKADMAALQSIIDRLKEELSHLSESHQQVMEL) adopt a coiled-coil conformation.

The protein belongs to the SctE/SipB/YopB family. The core secretion machinery of the T3SS is composed of approximately 20 different proteins, including cytoplasmic components, a base, an export apparatus and a needle. This subunit is involved in the formation of a pore, called the translocon, in host membrane. Interacts with YopD/SctB. Together with YopD/SctB, forms a multimeric integral membrane complex.

It is found in the secreted. The protein resides in the host membrane. Its function is as follows. Component of the type III secretion system (T3SS), also called injectisome, which is used to inject bacterial effector proteins into eukaryotic host cells. YopB/SctE and YopD/SctB are inserted into the host membrane where they form a pore and allow the translocation of effector proteins into the cytosol of target cells. Is an essential virulence determinant. Required for YopE and YopH translocation. Shows membrane disruptive activity in vitro. Interaction with the host cell triggers a signaling response, via activation of the small GTPase Ras, the MAPK kinases ERK and JNK and the nuclear factor NF-kappa-B pathways, and production of the proinflammatory cytokine interleukin-8 (IL-8). YopB/SctE-dependent signaling response is counteracted by YopE, YopH and YopJ in infected host cells. YopB/SctE is directly responsible for signaling and its insertion in the membrane is important to activate the signaling response in the host cell. The protein is Type 3 secretion system translocon protein SctE of Yersinia pseudotuberculosis serotype I (strain IP32953).